A 281-amino-acid polypeptide reads, in one-letter code: Large ribosomal subunit protein uL2 (281 aa).

The tract at residues 208-281 is disordered; sequence AGRSRYAGQR…RGRKRGPHTR (74 aa). The span at 254 to 281 shows a compositional bias: basic residues; the sequence is TVGKKTRSHKARSNKFIVRGRKRGPHTR.

Belongs to the universal ribosomal protein uL2 family. In terms of assembly, part of the 50S ribosomal subunit. Forms a bridge to the 30S subunit in the 70S ribosome.

In terms of biological role, one of the primary rRNA binding proteins. Required for association of the 30S and 50S subunits to form the 70S ribosome, for tRNA binding and peptide bond formation. It has been suggested to have peptidyltransferase activity; this is somewhat controversial. Makes several contacts with the 16S rRNA in the 70S ribosome. This Limosilactobacillus fermentum (strain NBRC 3956 / LMG 18251) (Lactobacillus fermentum) protein is Large ribosomal subunit protein uL2.